The sequence spans 90 residues: Small ribosomal subunit protein bS18 (90 aa).

The protein belongs to the bacterial ribosomal protein bS18 family. Part of the 30S ribosomal subunit. Forms a tight heterodimer with protein bS6.

Binds as a heterodimer with protein bS6 to the central domain of the 16S rRNA, where it helps stabilize the platform of the 30S subunit. The sequence is that of Small ribosomal subunit protein bS18 from Bordetella bronchiseptica (strain ATCC BAA-588 / NCTC 13252 / RB50) (Alcaligenes bronchisepticus).